The following is a 58-amino-acid chain: Large ribosomal subunit protein bL32 (58 aa).

Over residues 1-19 (MAVPKKRTSKSKKNMRKAN) the composition is skewed to basic residues. Residues 1 to 58 (MAVPKKRTSKSKKNMRKANWKNQAKLAAKKALSLGKSVETQRSHSFVHPRYEEEEEED) form a disordered region. The segment covering 20-32 (WKNQAKLAAKKAL) has biased composition (low complexity).

Belongs to the bacterial ribosomal protein bL32 family.

In Trichodesmium erythraeum (strain IMS101), this protein is Large ribosomal subunit protein bL32.